The chain runs to 82 residues: Small ribosomal subunit protein bS18 (82 aa).

Belongs to the bacterial ribosomal protein bS18 family. Part of the 30S ribosomal subunit. Forms a tight heterodimer with protein bS6.

Binds as a heterodimer with protein bS6 to the central domain of the 16S rRNA, where it helps stabilize the platform of the 30S subunit. The sequence is that of Small ribosomal subunit protein bS18 from Chlamydia felis (strain Fe/C-56) (Chlamydophila felis).